Reading from the N-terminus, the 229-residue chain is Ribulose-phosphate 3-epimerase (229 aa).

Ser-13 contributes to the substrate binding site. Residues His-36, Asp-38, and His-69 each contribute to the a divalent metal cation site. Catalysis depends on Asp-38, which acts as the Proton acceptor. Residues His-69, 145–148 (GFGG), 178–180 (DGG), and 200–201 (GS) contribute to the substrate site. Asp-178 lines the a divalent metal cation pocket. Asp-178 serves as the catalytic Proton donor.

This sequence belongs to the ribulose-phosphate 3-epimerase family. It depends on a divalent metal cation as a cofactor.

The enzyme catalyses D-ribulose 5-phosphate = D-xylulose 5-phosphate. It participates in carbohydrate degradation. Its function is as follows. Catalyzes the reversible epimerization of D-ribulose 5-phosphate to D-xylulose 5-phosphate. This Mycobacterium bovis (strain ATCC BAA-935 / AF2122/97) protein is Ribulose-phosphate 3-epimerase.